Consider the following 458-residue polypeptide: Methionine aminopeptidase 2-2 (458 aa).

Residues 1 to 14 (MGSKTPERDGHKGQ) are compositionally biased toward basic and acidic residues. The interval 1–93 (MGSKTPERDG…QSSPPRVPLS (93 aa)) is disordered. The span at 67 to 82 (QKKKRKSKKKGKKKAA) shows a compositional bias: basic residues. Position 209 (histidine 209) interacts with substrate. The a divalent metal cation site is built by aspartate 230, aspartate 241, and histidine 310. Histidine 318 contributes to the substrate binding site. Positions 343 and 439 each coordinate a divalent metal cation.

This sequence belongs to the peptidase M24A family. Methionine aminopeptidase eukaryotic type 2 subfamily. It depends on Co(2+) as a cofactor. Requires Zn(2+) as cofactor. Mn(2+) serves as cofactor. Fe(2+) is required as a cofactor.

The protein localises to the cytoplasm. It carries out the reaction Release of N-terminal amino acids, preferentially methionine, from peptides and arylamides.. Cotranslationally removes the N-terminal methionine from nascent proteins. The N-terminal methionine is often cleaved when the second residue in the primary sequence is small and uncharged (Met-Ala-, Cys, Gly, Pro, Ser, Thr, or Val). This Emericella nidulans (strain FGSC A4 / ATCC 38163 / CBS 112.46 / NRRL 194 / M139) (Aspergillus nidulans) protein is Methionine aminopeptidase 2-2.